A 118-amino-acid polypeptide reads, in one-letter code: Basic phospholipase A2 CM-III (118 aa).

Disulfide bonds link C11-C70, C26-C117, C28-C44, C43-C98, C50-C91, C59-C84, and C77-C89. The Ca(2+) site is built by Y27, G29, and G31. The active site involves H47. D48 lines the Ca(2+) pocket. The Coagulation factor Xa binding motif motif lies at 52 to 69; sequence EKAGKMGCWPYFTLYKYK. D92 is an active-site residue.

The protein belongs to the phospholipase A2 family. Group I subfamily. D49 sub-subfamily. Ca(2+) serves as cofactor. In terms of tissue distribution, expressed by the venom gland.

The protein resides in the secreted. It carries out the reaction a 1,2-diacyl-sn-glycero-3-phosphocholine + H2O = a 1-acyl-sn-glycero-3-phosphocholine + a fatty acid + H(+). Snake venom phospholipase A2 (PLA2) that shows several activities. It shows strong anticoagulant activity, probably by binding to coagulation factor Xa (F10) and inhibiting the formation of the prothrombinase complex, shows direct hemolytic action, causes neuromuscular blockade with a gradual contracture and a decreased sensitivity to ACh and KCl, abolishes twitches evoked by indirect stimulation earlier than those by direct stimulation (in the mouse phrenic nerve-diaphragm preparation), and causes myonecrosis when injected intramuscularly. PLA2 catalyzes the calcium-dependent hydrolysis of the 2-acyl groups in 3-sn-phosphoglycerides. The sequence is that of Basic phospholipase A2 CM-III from Naja mossambica (Mozambique spitting cobra).